The primary structure comprises 838 residues: Protein translocase subunit SecA (838 aa).

Residues Gln86, 104-108, and Asp493 contribute to the ATP site; that span reads GEGKT. Disordered regions lie at residues 517–536 and 789–838; these read RRID…PGSS and KVAE…CCGQ. Residues 801–819 are compositionally biased toward basic and acidic residues; sequence TDGDSKAKRQPVRKKETVG. Residues Cys824, Cys826, Cys835, and Cys836 each coordinate Zn(2+).

It belongs to the SecA family. Monomer and homodimer. Part of the essential Sec protein translocation apparatus which comprises SecA, SecYEG and auxiliary proteins SecDF. Other proteins may also be involved. The cofactor is Zn(2+).

It is found in the cell membrane. Its subcellular location is the cytoplasm. The enzyme catalyses ATP + H2O + cellular proteinSide 1 = ADP + phosphate + cellular proteinSide 2.. Part of the Sec protein translocase complex. Interacts with the SecYEG preprotein conducting channel. Has a central role in coupling the hydrolysis of ATP to the transfer of proteins into and across the cell membrane, serving as an ATP-driven molecular motor driving the stepwise translocation of polypeptide chains across the membrane. This Halalkalibacterium halodurans (strain ATCC BAA-125 / DSM 18197 / FERM 7344 / JCM 9153 / C-125) (Bacillus halodurans) protein is Protein translocase subunit SecA.